Reading from the N-terminus, the 1274-residue chain is Myosin-binding protein C, cardiac-type (1274 aa).

The residue at position 1 (methionine 1) is an N-acetylmethionine. The region spanning 8 to 95 is the Ig-like C2-type 1 domain; the sequence is PVSAFTKKPR…SKVKFDLKVT (88 aa). Residue serine 47 is modified to Phosphoserine. Over residues 95–104 the composition is skewed to basic and acidic residues; it reads TEPAPPEKAE. The segment at 95–153 is disordered; the sequence is TEPAPPEKAESAVAPTSMEAPETPKEVPALATQLEGNVSSPEGSVSVTQDGSVAGSQGA. Phosphothreonine is present on threonine 117. Over residues 128–149 the composition is skewed to polar residues; it reads LEGNVSSPEGSVSVTQDGSVAG. The Ig-like C2-type 2 domain maps to 157-259; sequence PIGLFLMRPQ…KFDSCNFNLT (103 aa). Zn(2+) is bound by residues glutamine 212, histidine 214, glutamate 227, and histidine 229. Phosphoserine is present on serine 279. Threonine 287 is modified (phosphothreonine; by PKA and PKC). Residue serine 288 is modified to Phosphoserine. A Phosphoserine; by PKA modification is found at serine 307. Phosphoserine occurs at positions 312 and 427. Ig-like C2-type domains lie at 361 to 452 and 452 to 546; these read KKST…VKEP and PPVL…KKLE. A disulfide bridge connects residues cysteine 436 and cysteine 443. 2 positions are modified to phosphoserine: serine 459 and serine 550. A Phosphothreonine modification is found at threonine 607. Residues 645-765 form the Ig-like C2-type 5 domain; sequence PKIHLDCPGS…PVGEDQVNLT (121 aa). 2 Fibronectin type-III domains span residues 774–870 and 872–967; these read APAA…IGPP and EPTH…VQEI. One can recognise an Ig-like C2-type 6 domain in the interval 971–1059; that stretch reads PRLQLPRHLR…ENMEDKATLV (89 aa). Positions 1068–1163 constitute a Fibronectin type-III 3 domain; the sequence is PPLDIRVVET…TKEPIFIPRP (96 aa). The Ig-like C2-type 7 domain occupies 1181-1269; the sequence is PSFTQPLTNR…GEAQCECRLE (89 aa). The residue at position 1241 (arginine 1241) is an Omega-N-methylarginine.

The protein belongs to the immunoglobulin superfamily. MyBP family. Substrate for phosphorylation by PKA and PKC. Reversible phosphorylation appears to modulate contraction. Post-translationally, polyubiquitinated.

Functionally, thick filament-associated protein located in the crossbridge region of vertebrate striated muscle a bands. In vitro it binds MHC, F-actin and native thin filaments, and modifies the activity of actin-activated myosin ATPase. It may modulate muscle contraction or may play a more structural role. In Rattus norvegicus (Rat), this protein is Myosin-binding protein C, cardiac-type (Mybpc3).